Reading from the N-terminus, the 294-residue chain is Endolytic peptidoglycan transglycosylase RlpA (294 aa).

The first 23 residues, 1-23, serve as a signal peptide directing secretion; that stretch reads MKQKIFQILTALCCIFYVMSAQA. In terms of domain architecture, SPOR spans 216–291; the sequence is EKYTTVYKIR…NYSKPLIVYT (76 aa).

The protein belongs to the RlpA family.

Lytic transglycosylase with a strong preference for naked glycan strands that lack stem peptides. This is Endolytic peptidoglycan transglycosylase RlpA from Pasteurella multocida (strain Pm70).